A 307-amino-acid polypeptide reads, in one-letter code: Ribosomal RNA small subunit methyltransferase A (307 aa).

6 residues coordinate S-adenosyl-L-methionine: N35, V37, G62, E83, D113, and N136.

This sequence belongs to the class I-like SAM-binding methyltransferase superfamily. rRNA adenine N(6)-methyltransferase family. RsmA subfamily.

The protein localises to the cytoplasm. The enzyme catalyses adenosine(1518)/adenosine(1519) in 16S rRNA + 4 S-adenosyl-L-methionine = N(6)-dimethyladenosine(1518)/N(6)-dimethyladenosine(1519) in 16S rRNA + 4 S-adenosyl-L-homocysteine + 4 H(+). Specifically dimethylates two adjacent adenosines (A1518 and A1519) in the loop of a conserved hairpin near the 3'-end of 16S rRNA in the 30S particle. May play a critical role in biogenesis of 30S subunits. The polypeptide is Ribosomal RNA small subunit methyltransferase A (Bifidobacterium longum (strain DJO10A)).